The following is a 121-amino-acid chain: Large ribosomal subunit protein uL14c (121 aa).

Belongs to the universal ribosomal protein uL14 family. Part of the 50S ribosomal subunit.

Its subcellular location is the plastid. It localises to the organellar chromatophore. Binds to 23S rRNA. This is Large ribosomal subunit protein uL14c from Paulinella chromatophora.